A 418-amino-acid chain; its full sequence is Serine hydroxymethyltransferase (418 aa).

(6S)-5,6,7,8-tetrahydrofolate contacts are provided by residues Leu121 and 125 to 127 (GHL). Residue Lys230 is modified to N6-(pyridoxal phosphate)lysine. (6S)-5,6,7,8-tetrahydrofolate is bound at residue 356-358 (SPF).

The protein belongs to the SHMT family. In terms of assembly, homodimer. The cofactor is pyridoxal 5'-phosphate.

The protein resides in the cytoplasm. It catalyses the reaction (6R)-5,10-methylene-5,6,7,8-tetrahydrofolate + glycine + H2O = (6S)-5,6,7,8-tetrahydrofolate + L-serine. It functions in the pathway one-carbon metabolism; tetrahydrofolate interconversion. The protein operates within amino-acid biosynthesis; glycine biosynthesis; glycine from L-serine: step 1/1. In terms of biological role, catalyzes the reversible interconversion of serine and glycine with tetrahydrofolate (THF) serving as the one-carbon carrier. This reaction serves as the major source of one-carbon groups required for the biosynthesis of purines, thymidylate, methionine, and other important biomolecules. Also exhibits THF-independent aldolase activity toward beta-hydroxyamino acids, producing glycine and aldehydes, via a retro-aldol mechanism. The chain is Serine hydroxymethyltransferase from Shewanella woodyi (strain ATCC 51908 / MS32).